The following is an 87-amino-acid chain: Phosphoribosyl-ATP pyrophosphatase (87 aa).

The protein belongs to the PRA-PH family.

Its subcellular location is the cytoplasm. It carries out the reaction 1-(5-phospho-beta-D-ribosyl)-ATP + H2O = 1-(5-phospho-beta-D-ribosyl)-5'-AMP + diphosphate + H(+). It functions in the pathway amino-acid biosynthesis; L-histidine biosynthesis; L-histidine from 5-phospho-alpha-D-ribose 1-diphosphate: step 2/9. This is Phosphoribosyl-ATP pyrophosphatase from Paenarthrobacter aurescens (strain TC1).